The chain runs to 874 residues: GRB2-associated and regulator of MAPK protein 2 (874 aa).

The segment at 12-339 (RWSMGAFPLD…LLAGDPRVER (328 aa)) is CABIT. Over residues 188–206 (GGGGPASAGAAGGTGGGGA) the composition is skewed to gly residues. 5 disordered regions span residues 188-207 (GGGG…GGAR), 388-422 (PGLA…EPAA), 437-545 (GPEG…SPSP), 563-598 (GESS…AASL), and 625-742 (APFG…PSKA). 2 stretches are compositionally biased toward low complexity: residues 388 to 403 (PGLA…APAG) and 518 to 545 (SPSS…SPSP). Residues 575–585 (PSTTQPSQASR) are compositionally biased toward polar residues. 2 stretches are compositionally biased toward low complexity: residues 632-650 (PFSG…SSGP) and 658-691 (ATSG…SSSS). The residue at position 735 (Ser-735) is a Phosphoserine. An SAM domain is found at 807–871 (SALSLEEVSR…KIMQFIKGWR (65 aa)).

It belongs to the GAREM family.

Functionally, probable adapter protein that may provide a link between cell surface epidermal growth factor receptor and the MAPK/ERK signaling pathway. The sequence is that of GRB2-associated and regulator of MAPK protein 2 (GAREM2) from Homo sapiens (Human).